A 351-amino-acid polypeptide reads, in one-letter code: UDP-3-O-acylglucosamine N-acyltransferase (351 aa).

The active-site Proton acceptor is histidine 240.

The protein belongs to the transferase hexapeptide repeat family. LpxD subfamily. As to quaternary structure, homotrimer.

The catalysed reaction is a UDP-3-O-[(3R)-3-hydroxyacyl]-alpha-D-glucosamine + a (3R)-hydroxyacyl-[ACP] = a UDP-2-N,3-O-bis[(3R)-3-hydroxyacyl]-alpha-D-glucosamine + holo-[ACP] + H(+). It participates in bacterial outer membrane biogenesis; LPS lipid A biosynthesis. Catalyzes the N-acylation of UDP-3-O-acylglucosamine using 3-hydroxyacyl-ACP as the acyl donor. Is involved in the biosynthesis of lipid A, a phosphorylated glycolipid that anchors the lipopolysaccharide to the outer membrane of the cell. The protein is UDP-3-O-acylglucosamine N-acyltransferase of Ectopseudomonas mendocina (strain ymp) (Pseudomonas mendocina).